A 527-amino-acid polypeptide reads, in one-letter code: AAA ATPase forming ring-shaped complexes (527 aa).

Positions 1–18 (MVTMSSPTDSSPSNSFSD) are enriched in low complexity. Positions 1–38 (MVTMSSPTDSSPSNSFSDFNREEQSRLSDEVRQLKRTN) are disordered. Basic and acidic residues predominate over residues 19–33 (FNREEQSRLSDEVRQ). Residues 21-53 (REEQSRLSDEVRQLKRTNSDLGARNAKLAEMLK) adopt a coiled-coil conformation. ATP is bound at residue 257–262 (GCGKTL). Residues 492-515 (DENQQSEDLPNTSNPDEWSRITGR) are disordered. Residues 497–507 (SEDLPNTSNPD) show a composition bias toward polar residues.

It belongs to the AAA ATPase family. Homohexamer. Assembles into a hexameric ring structure.

The sequence is that of AAA ATPase forming ring-shaped complexes from Corynebacterium glutamicum (strain R).